A 294-amino-acid polypeptide reads, in one-letter code: Pyridoxal 5'-phosphate synthase subunit PdxS (294 aa).

Aspartate 24 serves as a coordination point for D-ribose 5-phosphate. Lysine 81 (schiff-base intermediate with D-ribose 5-phosphate) is an active-site residue. A D-ribose 5-phosphate-binding site is contributed by glycine 153. Arginine 165 provides a ligand contact to D-glyceraldehyde 3-phosphate. D-ribose 5-phosphate-binding positions include glycine 214 and 235–236; that span reads GS.

Belongs to the PdxS/SNZ family. As to quaternary structure, in the presence of PdxT, forms a dodecamer of heterodimers.

The catalysed reaction is aldehydo-D-ribose 5-phosphate + D-glyceraldehyde 3-phosphate + L-glutamine = pyridoxal 5'-phosphate + L-glutamate + phosphate + 3 H2O + H(+). Its pathway is cofactor biosynthesis; pyridoxal 5'-phosphate biosynthesis. Catalyzes the formation of pyridoxal 5'-phosphate from ribose 5-phosphate (RBP), glyceraldehyde 3-phosphate (G3P) and ammonia. The ammonia is provided by the PdxT subunit. Can also use ribulose 5-phosphate and dihydroxyacetone phosphate as substrates, resulting from enzyme-catalyzed isomerization of RBP and G3P, respectively. This is Pyridoxal 5'-phosphate synthase subunit PdxS from Bacillus licheniformis (strain ATCC 14580 / DSM 13 / JCM 2505 / CCUG 7422 / NBRC 12200 / NCIMB 9375 / NCTC 10341 / NRRL NRS-1264 / Gibson 46).